A 657-amino-acid chain; its full sequence is tRNA 5-methylaminomethyl-2-thiouridine biosynthesis bifunctional protein MnmC (657 aa).

The tract at residues 1-235 (MSDAHNAQLD…KREMLAGPFQ (235 aa)) is tRNA (mnm(5)s(2)U34)-methyltransferase. An FAD-dependent cmnm(5)s(2)U34 oxidoreductase region spans residues 261-657 (IGAGLAGCAT…QLIRGTGSPT (397 aa)).

In the N-terminal section; belongs to the methyltransferase superfamily. tRNA (mnm(5)s(2)U34)-methyltransferase family. It in the C-terminal section; belongs to the DAO family. It depends on FAD as a cofactor.

The protein localises to the cytoplasm. The catalysed reaction is 5-aminomethyl-2-thiouridine(34) in tRNA + S-adenosyl-L-methionine = 5-methylaminomethyl-2-thiouridine(34) in tRNA + S-adenosyl-L-homocysteine + H(+). Functionally, catalyzes the last two steps in the biosynthesis of 5-methylaminomethyl-2-thiouridine (mnm(5)s(2)U) at the wobble position (U34) in tRNA. Catalyzes the FAD-dependent demodification of cmnm(5)s(2)U34 to nm(5)s(2)U34, followed by the transfer of a methyl group from S-adenosyl-L-methionine to nm(5)s(2)U34, to form mnm(5)s(2)U34. In Ectopseudomonas mendocina (strain ymp) (Pseudomonas mendocina), this protein is tRNA 5-methylaminomethyl-2-thiouridine biosynthesis bifunctional protein MnmC.